The primary structure comprises 340 residues: GTPase Obg (340 aa).

The Obg domain maps to 1 to 158 (MSFIDEAKIY…KHIILKLKII (158 aa)). The 167-residue stretch at 159–325 (SDVGIIGLPN…LSTLIKQIHK (167 aa)) folds into the OBG-type G domain. GTP-binding positions include 165 to 172 (GLPNAGKS), 190 to 194 (FTTLE), 211 to 214 (DIPG), 278 to 281 (NKSD), and 306 to 308 (SSI). The Mg(2+) site is built by serine 172 and threonine 192.

It belongs to the TRAFAC class OBG-HflX-like GTPase superfamily. OBG GTPase family. Monomer. Mg(2+) serves as cofactor.

The protein localises to the cytoplasm. An essential GTPase which binds GTP, GDP and possibly (p)ppGpp with moderate affinity, with high nucleotide exchange rates and a fairly low GTP hydrolysis rate. Plays a role in control of the cell cycle, stress response, ribosome biogenesis and in those bacteria that undergo differentiation, in morphogenesis control. In Ehrlichia canis (strain Jake), this protein is GTPase Obg.